The sequence spans 139 residues: MPSRPDKNLETFPNPTQERDYHIHMEIPEFTCLCPKTGQPDFATLILDYIPDKKCVELKSLKLYIWSFRDENAFHEAVTNRIVDDLATALQPRYLRLTAKFYVRGGIFTTVVAEHRHSGWTPLPSVDLFHFDSQPSTRG.

Residue cysteine 34 is the Thioimide intermediate of the active site. Aspartate 41 acts as the Proton donor in catalysis. Residues 56-58 (VEL) and 75-76 (HE) contribute to the substrate site.

It belongs to the GTP cyclohydrolase I family. QueF type 1 subfamily.

It is found in the cytoplasm. The catalysed reaction is 7-aminomethyl-7-carbaguanine + 2 NADP(+) = 7-cyano-7-deazaguanine + 2 NADPH + 3 H(+). Its pathway is tRNA modification; tRNA-queuosine biosynthesis. Functionally, catalyzes the NADPH-dependent reduction of 7-cyano-7-deazaguanine (preQ0) to 7-aminomethyl-7-deazaguanine (preQ1). This Nitrosospira multiformis (strain ATCC 25196 / NCIMB 11849 / C 71) protein is NADPH-dependent 7-cyano-7-deazaguanine reductase.